The primary structure comprises 437 residues: Elongation factor 1-gamma (437 aa).

Residue Ala-2 is modified to N-acetylalanine. In terms of domain architecture, GST N-terminal spans 2–87 (AAGTLYTYPE…YVSNEELRGS (86 aa)). Positions 88–216 (TPEAAAQVVQ…VKLCEKMAQF (129 aa)) constitute a GST C-terminal domain. An N6-acetyllysine mark is found at Lys-147 and Lys-212. Residues 221–254 (FAETQPKKDTPRKEKGSREEKQKPQAERKEEKKA) show a composition bias toward basic and acidic residues. The disordered stretch occupies residues 221–268 (FAETQPKKDTPRKEKGSREEKQKPQAERKEEKKAAAPAPEEEMDECEQ). Lys-253 is covalently cross-linked (Glycyl lysine isopeptide (Lys-Gly) (interchain with G-Cter in SUMO1)). The EF-1-gamma C-terminal domain occupies 276–437 (AKDPFAHLPK…KAFNQGKIFK (162 aa)). Lys-285 participates in a covalent cross-link: Glycyl lysine isopeptide (Lys-Gly) (interchain with G-Cter in SUMO2). Lys-401 bears the N6-acetyllysine mark. Lys-434 carries the post-translational modification N6-acetyllysine; alternate. An N6-malonyllysine; alternate modification is found at Lys-434.

As to quaternary structure, EF-1 is composed of four subunits: alpha, beta, delta, and gamma. As to expression, highly expressed in pancreatic tumor tissue and to a lesser extent in normal kidney, intestine, pancreas, stomach, lung, brain, spleen and liver.

Its function is as follows. Probably plays a role in anchoring the complex to other cellular components. The polypeptide is Elongation factor 1-gamma (EEF1G) (Homo sapiens (Human)).